The following is a 477-amino-acid chain: PEP-dependent dihydroxyacetone kinase, phosphoryl donor subunit DhaM (477 aa).

Residues 1 to 135 form the PTS EIIA type-4 domain; the sequence is MIGLIIVSHS…QALQAKQQQL (135 aa). The active-site Tele-phosphohistidine intermediate is His9. The region spanning 156–243 is the HPr domain; the sequence is ALTTQWVVKN…QLAQHNFGDN (88 aa). His170 functions as the Pros-phosphohistidine intermediate in the catalytic mechanism. The PTS EI-like, N-terminal part stretch occupies residues 269 to 477; it reads HAPNTELCIS…IETRSLIVAS (209 aa). His435 acts as the Tele-phosphohistidine intermediate in catalysis.

Belongs to the PEP-utilizing enzyme family. Homodimer. The dihydroxyacetone kinase complex is composed of a homodimer of DhaM, a homodimer of DhaK and the subunit DhaL.

The enzyme catalyses dihydroxyacetone + phosphoenolpyruvate = dihydroxyacetone phosphate + pyruvate. Functionally, component of the dihydroxyacetone kinase complex, which is responsible for the phosphoenolpyruvate (PEP)-dependent phosphorylation of dihydroxyacetone. DhaM serves as the phosphoryl donor. Is phosphorylated by phosphoenolpyruvate in an EI- and HPr-dependent reaction, and a phosphorelay system on histidine residues finally leads to phosphoryl transfer to DhaL and dihydroxyacetone. The protein is PEP-dependent dihydroxyacetone kinase, phosphoryl donor subunit DhaM of Providencia stuartii (strain MRSN 2154).